The sequence spans 137 residues: Phosphoribosyl-ATP pyrophosphatase (137 aa).

The span at Glu-114–Leu-124 shows a compositional bias: basic and acidic residues. The segment at Glu-114–Pro-137 is disordered.

Belongs to the PRA-PH family.

The protein resides in the cytoplasm. The enzyme catalyses 1-(5-phospho-beta-D-ribosyl)-ATP + H2O = 1-(5-phospho-beta-D-ribosyl)-5'-AMP + diphosphate + H(+). It participates in amino-acid biosynthesis; L-histidine biosynthesis; L-histidine from 5-phospho-alpha-D-ribose 1-diphosphate: step 2/9. The chain is Phosphoribosyl-ATP pyrophosphatase from Paracidovorax citrulli (strain AAC00-1) (Acidovorax citrulli).